The following is a 429-amino-acid chain: MIVNIIGAGLAGVEVAWKLLNTGVKVRIFEQKPKKFSTVHKNPNFGELVCSNSLKSESLNNAEGILKAEMNILDSLVLKCAYRCRVPAGKALAVDRDKFSQCITEHILSFDNVEVIREEIKSIDLKEDEIWVVATGPTTDGEFANWLSNLTGGFLNFFDAVAPIISGDSIDFNKCFFADRYGKGTSDYINCPMTKEEYERFYKELINAEKIEMEDFDRKLLFERCQPIEEIAKSGEKSLLFGPLRPVGLIDPRTGKMPYAIIQLRKEDENGNMYNLVGFQTRLKWPQQKRIIRLIPGLENAEILRYGVMHRNTYIDSPKVLDEFLRHKKFQNLFFAGQITGVEGYVESAATGIFVGINILRFLEKKELVALPTKTMLGALLNYITTSKQLKPMYANFGLVDVKMGKKEKREKLHKICLEEMKKFLYMLK.

FAD is bound at residue 7–12; the sequence is GAGLAG.

Belongs to the MnmG family. TrmFO subfamily. FAD serves as cofactor.

The protein resides in the cytoplasm. The enzyme catalyses uridine(54) in tRNA + (6R)-5,10-methylene-5,6,7,8-tetrahydrofolate + NADH + H(+) = 5-methyluridine(54) in tRNA + (6S)-5,6,7,8-tetrahydrofolate + NAD(+). The catalysed reaction is uridine(54) in tRNA + (6R)-5,10-methylene-5,6,7,8-tetrahydrofolate + NADPH + H(+) = 5-methyluridine(54) in tRNA + (6S)-5,6,7,8-tetrahydrofolate + NADP(+). Catalyzes the folate-dependent formation of 5-methyl-uridine at position 54 (M-5-U54) in all tRNAs. The chain is Methylenetetrahydrofolate--tRNA-(uracil-5-)-methyltransferase TrmFO from Thermosipho melanesiensis (strain DSM 12029 / CIP 104789 / BI429).